The following is a 463-amino-acid chain: Cytidylate cyclase (463 aa).

Residues 122–231 enclose the Guanylate cyclase domain; sequence VTMFMDIIGS…IGIRIGIDLG (110 aa). F125 lines the a ribonucleoside 5'-triphosphate pocket. Positions 127, 128, and 171 each coordinate Mn(2+). The interval 334 to 454 is AGS-C domain; sequence KPSRIKVVIS…VISNDTVIER (121 aa).

The protein belongs to the adenylyl cyclase class-4/guanylyl cyclase family. Pyrimidine cyclase subfamily. In terms of assembly, homodimer. It depends on Mn(2+) as a cofactor.

It localises to the cytoplasm. It catalyses the reaction CTP = 3',5'-cyclic CMP + diphosphate. Functionally, pycsar (pyrimidine cyclase system for antiphage resistance) provides immunity against bacteriophage. The pyrimidine cyclase (PycC) synthesizes cyclic nucleotides in response to infection; these serve as specific second messenger signals. The signal activates the adjacent effector, leading to bacterial cell death and abortive phage infection. A clade E Pycsar system. Its function is as follows. The pyrimidine cyclase gene of a two-gene Pycsar system, generates cyclic CMP (cCMP) from CTP in response to bacteriophage infection. Has little to no activity on ATP, GTP or UTP. Expression of this and adjacent effector Ec303145PycTM (AC P0DV27) confers resistance to bacteriophage P1, T5, lambda-vir and phi27. This is Cytidylate cyclase from Escherichia coli.